The primary structure comprises 30 residues: Fimbrial assembly protein, serogroup B1 (30 aa).

The protein is Fimbrial assembly protein, serogroup B1 (fimB) of Dichelobacter nodosus (Bacteroides nodosus).